The primary structure comprises 404 residues: Probable RNA polymerase sigma-C factor (404 aa).

Positions 193–206 (DLIQEGTLGLERAV) match the Polymerase core binding motif. Positions 362-381 (LSEIGRILNLSRERVRQIEA) form a DNA-binding region, H-T-H motif.

Belongs to the sigma-70 factor family.

In terms of biological role, sigma factors are initiation factors that promote the attachment of RNA polymerase to specific initiation sites and are then released. The protein is Probable RNA polymerase sigma-C factor (sigC) of Synechocystis sp. (strain ATCC 27184 / PCC 6803 / Kazusa).